The chain runs to 156 residues: Small ribosomal subunit protein uS7c (156 aa).

This sequence belongs to the universal ribosomal protein uS7 family. Part of the 30S ribosomal subunit.

It localises to the plastid. Its subcellular location is the chloroplast. One of the primary rRNA binding proteins, it binds directly to 16S rRNA where it nucleates assembly of the head domain of the 30S subunit. The protein is Small ribosomal subunit protein uS7c (rps7) of Pisum sativum (Garden pea).